The following is a 433-amino-acid chain: MPDYLGADQRKTKEDEKDDKPIRALDEGDIALLKTYGQSTYSRQIKQVEDDIQQLLKKINELTGIKESDTGLAPPALWDLAADKQTLQSEQPLQVARCTKIINADSEDPKYIINVKQFAKFVVDLSDQVAPTDIEEGMRVGVDRNKYQIHIPLPPKIDPTVTMMQVEEKPDVTYSDVGGCKEQIEKLREVVETPLLHPERFVNLGIEPPKGVLLFGPPGTGKTLCARAVANRTDACFIPVIGSELVQKYVGEGARMVRELFEMARTKKACLIFFDEIDAIGGARFDDGAGGDNEVQRTMLELINQLDGFDPRGNIKVLMATNRPDTLDPALMRPGRLDRKIEFSLPDLEGRTHIFKIHARSMSVERDIRFELLARLCPNSTGAEIRSVCTEAGMFAIRARRKIATEKDFLEAVNKVIKSYAKFSATPRYMTYN.

The tract at residues 1–22 (MPDYLGADQRKTKEDEKDDKPI) is disordered. The span at 8–22 (DQRKTKEDEKDDKPI) shows a compositional bias: basic and acidic residues. Position 116 is an N6-acetyllysine (Lys116). Residue 216–223 (GPPGTGKT) participates in ATP binding. Lys422 is modified (N6-acetyllysine).

Belongs to the AAA ATPase family. As to quaternary structure, component of the 19S proteasome regulatory particle complex. The 26S proteasome consists of a 20S core particle (CP) and two 19S regulatory subunits (RP). The regulatory particle is made of a lid composed of 9 subunits, a base containing 6 ATPases including PSMC2 and few additional components. Interacts with NDC80 and SQSTM1. Interacts with PAAF1. Interacts with TRIM5. Monoubiquitinated by RNF181. In terms of processing, phosphorylated. Dephosphorylated by UBLCP1 which impairs PSMC2 ATPase activity and disrupts 26S proteasome assembly.

It is found in the cytoplasm. Functionally, component of the 26S proteasome, a multiprotein complex involved in the ATP-dependent degradation of ubiquitinated proteins. This complex plays a key role in the maintenance of protein homeostasis by removing misfolded or damaged proteins, which could impair cellular functions, and by removing proteins whose functions are no longer required. Therefore, the proteasome participates in numerous cellular processes, including cell cycle progression, apoptosis, or DNA damage repair. PSMC2 belongs to the heterohexameric ring of AAA (ATPases associated with diverse cellular activities) proteins that unfolds ubiquitinated target proteins that are concurrently translocated into a proteolytic chamber and degraded into peptides. The protein is 26S proteasome regulatory subunit 7 (Psmc2) of Rattus norvegicus (Rat).